A 615-amino-acid polypeptide reads, in one-letter code: Elongation factor 4 (615 aa).

The tr-type G domain occupies 14-196; the sequence is AMIRNFCIIA…EIVRQVPAPV (183 aa). GTP contacts are provided by residues 26–31 and 143–146; these read DHGKST and NKID.

It belongs to the TRAFAC class translation factor GTPase superfamily. Classic translation factor GTPase family. LepA subfamily.

The protein resides in the cell membrane. It catalyses the reaction GTP + H2O = GDP + phosphate + H(+). Functionally, required for accurate and efficient protein synthesis under certain stress conditions. May act as a fidelity factor of the translation reaction, by catalyzing a one-codon backward translocation of tRNAs on improperly translocated ribosomes. Back-translocation proceeds from a post-translocation (POST) complex to a pre-translocation (PRE) complex, thus giving elongation factor G a second chance to translocate the tRNAs correctly. Binds to ribosomes in a GTP-dependent manner. In Frankia alni (strain DSM 45986 / CECT 9034 / ACN14a), this protein is Elongation factor 4.